We begin with the raw amino-acid sequence, 1222 residues long: BOS complex subunit NOMO1 (1222 aa).

The signal sequence occupies residues 1 to 31 (MLVGQGAGPLGPAVVTAAVVLLLSGVGPAHG). At 32 to 1155 (SEDIVVGCGG…NPTRKLPEQD (1124 aa)) the chain is on the extracellular side. N-linked (GlcNAc...) asparagine glycans are attached at residues Asn50, Asn218, and Asn618. A helical membrane pass occupies residues 1156 to 1176 (IAQGSYIALPLTLLVLLAGYN). The Cytoplasmic segment spans residues 1177–1222 (HDKLIPLLLQLTSRLQGVRALGQAASDNSGPEDAKRQAKKQKTRRT). A disordered region spans residues 1198–1222 (GQAASDNSGPEDAKRQAKKQKTRRT). The residue at position 1205 (Ser1205) is a Phosphoserine. Residues 1213-1222 (QAKKQKTRRT) are compositionally biased toward basic residues.

Component of the back of Sec61 (BOS) complex, composed of NCLN/Nicalin, NOMO (NOMO1, NOMO2 or NOMO3) and TMEM147. The BOS complex is part of the multi-pass translocon (MPT) complex, composed of three subcomplexes, the GEL complex (composed of RAB5IF/OPTI and TMCO1), the BOS complex (composed of NCLN/Nicalin, NOMO and TMEM147) and the PAT complex (composed of WDR83OS/Asterix and CCDC47). The MPT complex associates with the SEC61 complex. Due to the strong similarity between NOMO1, NOMO2 and NOMO3, similar interaction pattern probably occur for the three gene copies. Expressed in colon tumor tissue and in adjacent normal colonic mucosa.

The protein resides in the endoplasmic reticulum membrane. Component of the multi-pass translocon (MPT) complex that mediates insertion of multi-pass membrane proteins into the lipid bilayer of membranes. The MPT complex takes over after the SEC61 complex: following membrane insertion of the first few transmembrane segments of proteins by the SEC61 complex, the MPT complex occludes the lateral gate of the SEC61 complex to promote insertion of subsequent transmembrane regions. In Homo sapiens (Human), this protein is BOS complex subunit NOMO1 (NOMO1).